The sequence spans 253 residues: Vacuolar v-SNARE NYV1 (253 aa).

At 1–231 the chain is on the cytoplasmic side; sequence MKRFNVSYVE…EIMWWQKVKN (231 aa). A disordered region spans residues 147 to 166; that stretch reads LNSSGNGQSSNGNGQNTISD. Positions 148–162 are enriched in low complexity; the sequence is NSSGNGQSSNGNGQN. The v-SNARE coiled-coil homology domain occupies 167-227; it reads IGDATEDQIK…VNIKEIMWWQ (61 aa). Residues 232–252 traverse the membrane as a helical; Anchor for type IV membrane protein segment; the sequence is ITLLTFTIILFVSAAFMFFYL. Trp-253 is a topological domain (vacuolar).

Belongs to the synaptobrevin family. As to quaternary structure, present in a pentameric cis-SNARE complex composed of the v-SNAREs NYV1, VTI1 and YKT6, and the t-SNAREs VAM3 and VAM7 on vacuolar membranes. Interacts in trans with the cognate t-SNARE VAM3 during the docking step of homotypic vacuolar fusion. Interacts with the vacuolar transporter chaperone (VTC) complex and the vacuolar Ca(2+)-ATPase PMC1.

Its subcellular location is the vacuole membrane. Vacuolar v-SNARE required for docking. Only involved in homotypic vacuole fusion. Required for Ca(2+) efflux from the vacuolar lumen, a required signal for subsequent membrane fusion events, by inhibiting vacuolar Ca(2+)-ATPase PMC1 and promoting Ca(2+) release when forming trans-SNARE assemblies during the docking step. The polypeptide is Vacuolar v-SNARE NYV1 (NYV1) (Saccharomyces cerevisiae (strain ATCC 204508 / S288c) (Baker's yeast)).